The following is a 235-amino-acid chain: Small ribosomal subunit protein uS3 (235 aa).

A KH type-2 domain is found at 39-107 (IREFIKEECK…ELHLNIVEVR (69 aa)). The tract at residues 213-235 (QARDRKAQELQDGPAPRGAGGRR) is disordered.

It belongs to the universal ribosomal protein uS3 family. In terms of assembly, part of the 30S ribosomal subunit. Forms a tight complex with proteins S10 and S14.

In terms of biological role, binds the lower part of the 30S subunit head. Binds mRNA in the 70S ribosome, positioning it for translation. In Ruegeria pomeroyi (strain ATCC 700808 / DSM 15171 / DSS-3) (Silicibacter pomeroyi), this protein is Small ribosomal subunit protein uS3.